The sequence spans 984 residues: Zinc finger and BTB domain-containing protein 4 (984 aa).

The BTB domain occupies 30 to 131 (CDVTLIAGDT…IYSARLALPG (102 aa)). Lys-40 participates in a covalent cross-link: Glycyl lysine isopeptide (Lys-Gly) (interchain with G-Cter in SUMO2). 3 disordered regions span residues 71 to 104 (TGGSAPSPATTTAASSSSSPPPPASPHSSSPPRV), 172 to 210 (MVTSEPNEDSLGPGLRTDGGWEGDKAEPLTPDSQPRRPF), and 227 to 262 (THEAQCRRGSNTRGSAGLGPGGSGPGGPAGVDASAL). Low complexity predominate over residues 74–88 (SAPSPATTTAASSSS). The tract at residues 165–324 (VPPAPSSMVT…CRYCEKVFAL (160 aa)) is interaction with CBFA2T3. The segment at 210–232 (FPCPRCGKSFIHPKRLQTHEAQC) adopts a C2H2-type 1; atypical zinc-finger fold. The segment covering 242 to 255 (AGLGPGGSGPGGPA) has biased composition (gly residues). 3 C2H2-type zinc fingers span residues 285–307 (YVCAACERSYVTLSSLKRHSNVH), 313–335 (YPCRYCEKVFALAEYRTKHEVWH), and 341–364 (YQCIFCWETFVTYYNLKTHQRAFH). Ser-367 carries the post-translational modification Phosphoserine. The tract at residues 461–575 (GSSSSGAAGG…GSSQLQAPPP (115 aa)) is disordered. Residues 467–477 (AAGGGPVGTGG) show a composition bias toward gly residues. 2 stretches are compositionally biased toward low complexity: residues 478–488 (SQAASVITYTT) and 507–529 (ATPTSPASTAVIPATAAGPATAT). Residue Lys-548 forms a Glycyl lysine isopeptide (Lys-Gly) (interchain with G-Cter in SUMO2) linkage. Positions 552-565 (GVSGSGGSPTGTGR) are enriched in gly residues. Lys-590 is covalently cross-linked (Glycyl lysine isopeptide (Lys-Gly) (interchain with G-Cter in SUMO2)). 5 disordered regions span residues 593 to 696 (ISET…GERR), 713 to 734 (RKHQEAHSGGSHNSRTGRRSST), 756 to 836 (QRHA…VAGG), 853 to 876 (GGSRDPGAGKGKPGNEGPVGASEG), and 947 to 984 (QTAPPTPPTPPPPLPLPVPPKGVGEMTGVERTQKGDVG). The span at 604–627 (SGEEVEESEEEEEEEEEEDQEDQE) shows a compositional bias: acidic residues. Positions 628 to 637 (ESKAGGEDQL) are enriched in basic and acidic residues. C2H2-type zinc fingers lie at residues 697–719 (HRCGDCAQAFATLRKLRKHQEAH) and 736–758 (FTCPHCAKVCKTAAALNRHGQRH). Phosphothreonine; by HIPK2 occurs at positions 766 and 768. Over residues 807–819 (AAAAAAEASESAS) the composition is skewed to low complexity. Pro residues predominate over residues 948–966 (TAPPTPPTPPPPLPLPVPP). The residue at position 955 (Thr-955) is a Phosphothreonine; by HIPK2.

Interacts with HIPK2. Interacts with CBFA2T3. Interacts with ZBTB38. In terms of processing, phosphorylated by HIPK2. This phosphorylation reduces stability and triggers ZBTB4 protein degradation in response to DNA damage.

It is found in the nucleus. The protein localises to the chromosome. Functionally, transcriptional repressor with bimodal DNA-binding specificity. Represses transcription in a methyl-CpG-dependent manner. Binds with a higher affinity to methylated CpG dinucleotides in the consensus sequence 5'-CGCG-3' but can also bind to the non-methylated consensus sequence 5'-CTGCNA-3' also known as the consensus kaiso binding site (KBS). Can also bind specifically to a single methyl-CpG pair and can bind hemimethylated DNA but with a lower affinity compared to methylated DNA. Plays a role in postnatal myogenesis, may be involved in the regulation of satellite cells self-renewal. In Rattus norvegicus (Rat), this protein is Zinc finger and BTB domain-containing protein 4 (Zbtb4).